A 137-amino-acid polypeptide reads, in one-letter code: Nucleoside diphosphate kinase (137 aa).

ATP contacts are provided by lysine 11, phenylalanine 59, arginine 87, threonine 93, arginine 104, and asparagine 114. The active-site Pros-phosphohistidine intermediate is the histidine 117.

This sequence belongs to the NDK family. As to quaternary structure, homotetramer. Requires Mg(2+) as cofactor.

It localises to the cytoplasm. It carries out the reaction a 2'-deoxyribonucleoside 5'-diphosphate + ATP = a 2'-deoxyribonucleoside 5'-triphosphate + ADP. The catalysed reaction is a ribonucleoside 5'-diphosphate + ATP = a ribonucleoside 5'-triphosphate + ADP. In terms of biological role, major role in the synthesis of nucleoside triphosphates other than ATP. The ATP gamma phosphate is transferred to the NDP beta phosphate via a ping-pong mechanism, using a phosphorylated active-site intermediate. The sequence is that of Nucleoside diphosphate kinase from Frankia alni (strain DSM 45986 / CECT 9034 / ACN14a).